We begin with the raw amino-acid sequence, 493 residues long: Galactose-1-phosphate uridylyltransferase (493 aa).

The protein belongs to the galactose-1-phosphate uridylyltransferase type 2 family.

It is found in the cytoplasm. It carries out the reaction alpha-D-galactose 1-phosphate + UDP-alpha-D-glucose = alpha-D-glucose 1-phosphate + UDP-alpha-D-galactose. It participates in carbohydrate metabolism; galactose metabolism. The sequence is that of Galactose-1-phosphate uridylyltransferase from Streptococcus thermophilus (strain CNRZ 1066).